Reading from the N-terminus, the 250-residue chain is Acetylglutamate kinase (250 aa).

Substrate-binding positions include 41 to 42 (GG), Arg63, and Asn156.

Belongs to the acetylglutamate kinase family. ArgB subfamily.

The protein localises to the cytoplasm. The catalysed reaction is N-acetyl-L-glutamate + ATP = N-acetyl-L-glutamyl 5-phosphate + ADP. It functions in the pathway amino-acid biosynthesis; L-arginine biosynthesis; N(2)-acetyl-L-ornithine from L-glutamate: step 2/4. Catalyzes the ATP-dependent phosphorylation of N-acetyl-L-glutamate. This Listeria monocytogenes serotype 4b (strain F2365) protein is Acetylglutamate kinase.